Reading from the N-terminus, the 230-residue chain is Mitochondrial fission factor homolog B (230 aa).

The Cytoplasmic segment spans residues 1–210 (MSGAAFPSPT…ENKERAKREM (210 aa)). Residues 117-153 (EQTSSVSHPSEEVRTQTKTRRERSVSENAGVHHNGPL) form a disordered region. Ser-142 carries the post-translational modification Phosphoserine. The stretch at 179–210 (VDATSLRRQIVKLNRRLQLLEEENKERAKREM) forms a coiled coil. A helical; Anchor for type IV membrane protein transmembrane segment spans residues 211-228 (VMYSITVAFWLVNSWVWF). Topologically, residues 229 to 230 (RR) are extracellular.

It belongs to the Tango11 family.

Its subcellular location is the mitochondrion outer membrane. The protein resides in the peroxisome. Its function is as follows. Plays a role in mitochondrial and peroxisomal fission. Promotes the recruitment and association of the fission mediator dynamin-related protein 1 (DNM1L) to the mitochondrial surface. This Danio rerio (Zebrafish) protein is Mitochondrial fission factor homolog B.